Here is a 394-residue protein sequence, read N- to C-terminus: Elongation factor Tu 2 (394 aa).

The tr-type G domain maps to 10-204; that stretch reads KPHVNVGTIG…ALDSYIPQPE (195 aa). The segment at 19-26 is G1; that stretch reads GHVDHGKT. 19–26 is a GTP binding site; it reads GHVDHGKT. Thr-26 contributes to the Mg(2+) binding site. Residues 60 to 64 form a G2 region; it reads GITIN. Residues 81-84 are G3; sequence DCPG. Residues 81–85 and 136–139 each bind GTP; these read DCPGH and NKCD. The tract at residues 136 to 139 is G4; it reads NKCD. Residues 174-176 form a G5 region; it reads SAL.

It belongs to the TRAFAC class translation factor GTPase superfamily. Classic translation factor GTPase family. EF-Tu/EF-1A subfamily. In terms of assembly, monomer.

It localises to the cytoplasm. The enzyme catalyses GTP + H2O = GDP + phosphate + H(+). In terms of biological role, GTP hydrolase that promotes the GTP-dependent binding of aminoacyl-tRNA to the A-site of ribosomes during protein biosynthesis. The protein is Elongation factor Tu 2 of Yersinia pestis bv. Antiqua (strain Antiqua).